Reading from the N-terminus, the 1791-residue chain is Protein TIC 214 (1791 aa).

6 consecutive transmembrane segments (helical) span residues 19–39, 68–88, 91–111, 133–153, 176–196, and 230–250; these read IINSVVVVGLYYGFLTTFSIG, FIAGQLMMFISIYYAPLHLAL, PHTITVLALPYLLFHFFWNNH, VFLNNLIFQLFNHFILPSSML, VGWLIGHILFMKWVGLVLVWI, and IFSILLFITCVYYLGRIPSPI. Residues 257–271 show a composition bias toward basic and acidic residues; that stretch reads GTSETEERGGTKQDQ. Disordered stretches follow at residues 257-278 and 1498-1521; these read GTSETEERGGTKQDQEVSTEEA and ADQGELESDNEKQRNPELALPNQE.

This sequence belongs to the TIC214 family. Part of the Tic complex.

It is found in the plastid. The protein resides in the chloroplast inner membrane. Its function is as follows. Involved in protein precursor import into chloroplasts. May be part of an intermediate translocation complex acting as a protein-conducting channel at the inner envelope. In Aethionema grandiflorum (Persian stone-cress), this protein is Protein TIC 214.